Reading from the N-terminus, the 164-residue chain is Pleckstrin homology domain-containing family J member 1 (164 aa).

The 94-residue stretch at 15–108 folds into the PH domain; that stretch reads PAEMAAELGM…WMEALQRASY (94 aa).

This is Pleckstrin homology domain-containing family J member 1 (Plekhj1) from Mus musculus (Mouse).